The chain runs to 191 residues: Ribonuclease MC (191 aa).

An RNA-binding site is contributed by glutamine 9. Residues cysteine 15 and cysteine 23 are joined by a disulfide bond. RNA contacts are provided by residues histidine 34, 72 to 73 (NV), arginine 75, phenylalanine 81, 84 to 85 (HE), and 88 to 89 (KH). The Proton donor role is filled by histidine 34. 3 disulfide bridges follow: cysteine 48–cysteine 92, cysteine 152–cysteine 185, and cysteine 169–cysteine 180. The active site involves glutamate 85. The active-site Proton acceptor is the histidine 89.

The protein belongs to the RNase T2 family.

It carries out the reaction a ribonucleotidyl-ribonucleotide-RNA + H2O = a 3'-end 3'-phospho-ribonucleotide-RNA + a 5'-end dephospho-ribonucleoside-RNA + H(+). Its function is as follows. Ribonuclease cleaving preferentially the 5'-side of uridine. The protein is Ribonuclease MC of Momordica charantia (Bitter gourd).